The sequence spans 177 residues: ATP synthase subunit delta (177 aa).

This sequence belongs to the ATPase delta chain family. F-type ATPases have 2 components, F(1) - the catalytic core - and F(0) - the membrane proton channel. F(1) has five subunits: alpha(3), beta(3), gamma(1), delta(1), epsilon(1). F(0) has three main subunits: a(1), b(2) and c(10-14). The alpha and beta chains form an alternating ring which encloses part of the gamma chain. F(1) is attached to F(0) by a central stalk formed by the gamma and epsilon chains, while a peripheral stalk is formed by the delta and b chains.

It localises to the cell inner membrane. In terms of biological role, f(1)F(0) ATP synthase produces ATP from ADP in the presence of a proton or sodium gradient. F-type ATPases consist of two structural domains, F(1) containing the extramembraneous catalytic core and F(0) containing the membrane proton channel, linked together by a central stalk and a peripheral stalk. During catalysis, ATP synthesis in the catalytic domain of F(1) is coupled via a rotary mechanism of the central stalk subunits to proton translocation. Its function is as follows. This protein is part of the stalk that links CF(0) to CF(1). It either transmits conformational changes from CF(0) to CF(1) or is implicated in proton conduction. The protein is ATP synthase subunit delta of Haemophilus influenzae (strain PittGG).